We begin with the raw amino-acid sequence, 409 residues long: U-box domain-containing protein 28 (409 aa).

The 75-residue stretch at threonine 10–arginine 84 folds into the U-box domain. 3 ARM repeats span residues arginine 178–valine 218, aspartate 219–serine 261, and lysine 263–serine 304.

The catalysed reaction is S-ubiquitinyl-[E2 ubiquitin-conjugating enzyme]-L-cysteine + [acceptor protein]-L-lysine = [E2 ubiquitin-conjugating enzyme]-L-cysteine + N(6)-ubiquitinyl-[acceptor protein]-L-lysine.. Its pathway is protein modification; protein ubiquitination. Functions as an E3 ubiquitin ligase. The chain is U-box domain-containing protein 28 (PUB28) from Arabidopsis thaliana (Mouse-ear cress).